The sequence spans 141 residues: Large-conductance mechanosensitive channel (141 aa).

3 helical membrane passes run Val-16–Val-36, Leu-40–Val-60, and Gly-86–Val-106.

Belongs to the MscL family. As to quaternary structure, homopentamer.

The protein resides in the cell inner membrane. Functionally, channel that opens in response to stretch forces in the membrane lipid bilayer. May participate in the regulation of osmotic pressure changes within the cell. This chain is Large-conductance mechanosensitive channel, found in Cupriavidus necator (strain ATCC 17699 / DSM 428 / KCTC 22496 / NCIMB 10442 / H16 / Stanier 337) (Ralstonia eutropha).